A 776-amino-acid polypeptide reads, in one-letter code: Angiomotin-like protein 2 (776 aa).

The disordered stretch occupies residues 41-88; sequence GGAGAGGTGSPQASAEILAPEDTQVLQQATRQEPQGQEHQGGESHLAE. A required for interaction with CDH5 region spans residues 101–307; that stretch reads GEELPTYEEA…STQTSSAPSG (207 aa). Position 107 is a phosphotyrosine (tyrosine 107). 3 disordered regions span residues 119-142, 169-215, and 283-309; these read AQQA…GHRS, RNGA…QYPH, and GPLG…SGSA. The span at 177 to 192 shows a compositional bias: polar residues; that stretch reads HMSSSHSFPQLARNQQ. Residues 196-213 show a composition bias toward pro residues; sequence PRGPPAEGPEPRGPPPQY. A required for interaction with CDH1 region spans residues 220-307; it reads HETATAVTDP…STQTSSAPSG (88 aa). Residues 297-306 are compositionally biased toward polar residues; that stretch reads ASTQTSSAPS. 2 coiled-coil regions span residues 314–509 and 543–570; these read METL…LELR and ALRL…WEQK. Glycyl lysine isopeptide (Lys-Gly) (interchain with G-Cter in ubiquitin) cross-links involve residues lysine 347 and lysine 408. Disordered regions lie at residues 591-620 and 677-743; these read QRDT…GHRH and TQGW…LDPD. Over residues 678–687 the composition is skewed to polar residues; it reads QGWQSLSSSE. Phosphoserine is present on residues serine 756 and serine 759. Positions 773–776 match the PDZ-binding motif; sequence EILI.

It belongs to the angiomotin family. Part of a complex composed of AMOTL2, MAGI1 and CDH5, within the complex AMOTL2 acts as a scaffold protein for the interaction of MAGI1 with CDH5. The complex is required for coupling actin fibers to cell junctions in endothelial cells. Within the complex AMOTL2 (via its N-terminus) interacts with CDH5. Interacts (via N-terminus) with MAGI1. Interacts (via N-terminus) with ACTB; the interaction facilitates binding of cell junction complexes to actin fibers in endothelial cells. Interacts with CDH1; the interaction may facilitate binding of radial actin fibers to cell junction complexes. Interacts with SRC. Interacts with YAP1; the interaction is required for ubiquitination of AMOTL2 and localization of YAP1 to tight junctions. Interacts with WWP1; the interaction facilitates WWP1 interaction with the Crumbs complex and subsequent WWP1 translocation to the plasma membrane. WPP1 interaction with the Crumbs complex promotes WPP1 monoubiquitination of AMOTL2 which subsequently activates the Hippo signaling pathway. When ubiquitinated interacts with LATS2 (via UBA domain); the interaction promotes LATS2 phosphorylation of YAP1. Interacts (via PPXY motif) with WWTR1/TAZ (via WW domain); the interaction promotes WWTR1/TAZ localization to the cytoplasm and thereby inhibition of its transcriptional properties. Interacts with PHLDB2; interaction may facilitate PHLDB2 localization to the myotube podosome cortex that surrounds the core. In terms of processing, monoubiquitinated at Lys-347 and Lys-408 by Crumbs complex-bound WWP1. De-ubiquitinated at Lys-347 and Lys-408 by USP9X; the interaction may be promoted by cell contact inhibition. Deubiquitination of AMOTL2 negatively regulates Hippo signaling activation. Post-translationally, phosphorylation at Tyr-107 is necessary for efficient binding to SRC and synergistically functioning with SRC to activate the downstream MAPK pathway.

It localises to the recycling endosome. Its subcellular location is the cytoplasm. The protein resides in the cell projection. The protein localises to the podosome. It is found in the cell junction. Its function is as follows. Regulates the translocation of phosphorylated SRC to peripheral cell-matrix adhesion sites. Required for proper architecture of actin filaments. Plays a role in coupling actin fibers to cell junctions in endothelial cells and is therefore required for correct endothelial cell morphology via facilitating transcellular transmission of mechanical force resulting in endothelial cell elongation. Required for the anchoring of radial actin fibers to CDH1 junction complexes at the cell membrane which facilitates organization of radial actin fiber structure and cellular response to contractile forces. This contributes to maintenance of cell area, size, shape, epithelial sheet organization and trophectoderm cell properties that facilitate blastocyst zona hatching. Inhibits the Wnt/beta-catenin signaling pathway, probably by recruiting CTNNB1 to recycling endosomes and hence preventing its translocation to the nucleus. Participates in angiogenesis. Activates the Hippo signaling pathway in response to cell contact inhibition via interaction with and ubiquitination by Crumbs complex-bound WWP1. Ubiquitinated AMOTL2 then interacts with LATS2 which in turn phosphorylates YAP1, excluding it from the nucleus and localizing it to the cytoplasm and tight junctions, therefore ultimately repressing YAP1-driven transcription of target genes. Acts to inhibit WWTR1/TAZ transcriptional coactivator activity via sequestering WWTR1/TAZ in the cytoplasm and at tight junctions. Regulates the size and protein composition of the podosome cortex and core at myofibril neuromuscular junctions. Selectively promotes FGF-induced MAPK activation through SRC. May play a role in the polarity, proliferation and migration of endothelial cells. The sequence is that of Angiomotin-like protein 2 from Canis lupus familiaris (Dog).